The sequence spans 31 residues: Photosystem II reaction center protein T (31 aa).

Residues S3 to F23 traverse the membrane as a helical segment.

It belongs to the PsbT family. In terms of assembly, PSII is composed of 1 copy each of membrane proteins PsbA, PsbB, PsbC, PsbD, PsbE, PsbF, PsbH, PsbI, PsbJ, PsbK, PsbL, PsbM, PsbT, PsbX, PsbY, PsbZ, Psb30/Ycf12, peripheral proteins PsbO, CyanoQ (PsbQ), PsbU, PsbV and a large number of cofactors. It forms dimeric complexes.

It is found in the cellular thylakoid membrane. Functionally, found at the monomer-monomer interface of the photosystem II (PS II) dimer, plays a role in assembly and dimerization of PSII. PSII is a light-driven water plastoquinone oxidoreductase, using light energy to abstract electrons from H(2)O, generating a proton gradient subsequently used for ATP formation. The sequence is that of Photosystem II reaction center protein T from Microcystis aeruginosa (strain NIES-843 / IAM M-2473).